Here is a 274-residue protein sequence, read N- to C-terminus: Penicillin-insensitive murein endopeptidase (274 aa).

Positions 1 to 19 (MNKTAIALLALLASSASLA) are cleaved as a signal peptide. 3 disulfide bridges follow: Cys-44/Cys-265, Cys-187/Cys-235, and Cys-216/Cys-223. Zn(2+) is bound by residues His-110, His-113, Asp-120, Asp-147, His-150, and His-211. The disordered stretch occupies residues 228–274 (LPPSGDGCGAELQSWFEPPKPGTTKPEKKTPPPLPPSCQALLDEHVI).

The protein belongs to the peptidase M74 family. As to quaternary structure, dimer. The cofactor is Zn(2+).

It is found in the periplasm. Inhibited by Zn(2+) at 10 mM and by metal chelating agents EDTA and 1,10-phenanthroline. Murein endopeptidase that cleaves the D-alanyl-meso-2,6-diamino-pimelyl amide bond that connects peptidoglycan strands. Likely plays a role in the removal of murein from the sacculus and could also play a role in the integration of nascent murein strands into the sacculus. In Escherichia coli (strain K12), this protein is Penicillin-insensitive murein endopeptidase (mepA).